Here is a 142-residue protein sequence, read N- to C-terminus: MKTFMAKKEEIKREWYVVDAKGKVLGRLASEIAKILRGKHKPIYTPHVDTGDFVIVVNAKDVVLTGKKEQQKIYFFHSGYPGGHRLISAKDMRAKSPEKMIYLAVKGMLPKGPLGRKMLKKLKVYAGPEHPHQAQKPKELNI.

This sequence belongs to the universal ribosomal protein uL13 family. In terms of assembly, part of the 50S ribosomal subunit.

Functionally, this protein is one of the early assembly proteins of the 50S ribosomal subunit, although it is not seen to bind rRNA by itself. It is important during the early stages of 50S assembly. The protein is Large ribosomal subunit protein uL13 of Dictyoglomus thermophilum (strain ATCC 35947 / DSM 3960 / H-6-12).